A 224-amino-acid polypeptide reads, in one-letter code: tRNA (guanine-N(7)-)-methyltransferase (224 aa).

E45, E70, D97, and D119 together coordinate S-adenosyl-L-methionine. Residue D119 is part of the active site. Residues K123, D155, and 199–202 (TEYE) contribute to the substrate site.

This sequence belongs to the class I-like SAM-binding methyltransferase superfamily. TrmB family.

It carries out the reaction guanosine(46) in tRNA + S-adenosyl-L-methionine = N(7)-methylguanosine(46) in tRNA + S-adenosyl-L-homocysteine. It functions in the pathway tRNA modification; N(7)-methylguanine-tRNA biosynthesis. Functionally, catalyzes the formation of N(7)-methylguanine at position 46 (m7G46) in tRNA. The chain is tRNA (guanine-N(7)-)-methyltransferase from Ureaplasma urealyticum serovar 10 (strain ATCC 33699 / Western).